Reading from the N-terminus, the 2346-residue chain is Acetyl-CoA carboxylase 1 (2346 aa).

The residue at position 1 (Met-1) is an N-acetylmethionine. Residues Ser-5, Ser-23, Ser-25, Ser-29, Ser-34, Ser-48, Ser-50, and Ser-53 each carry the phosphoserine modification. Thr-58 carries the post-translational modification Phosphothreonine. Ser-78 and Ser-80 each carry phosphoserine. In terms of domain architecture, Biotin carboxylation spans 117–618 (VIEKVLIANN…DTGWLDRLIA (502 aa)). The ATP-grasp domain occupies 275–466 (SKRILNVPQE…LPAAQLQIAM (192 aa)). 315–320 (GGGGKG) is a binding site for ATP. 3 residues coordinate Mg(2+): Glu-424, Glu-437, and Asn-439. 3 residues coordinate Mn(2+): Glu-424, Glu-437, and Asn-439. Arg-441 is an active-site residue. Residue Ser-488 is modified to Phosphoserine. At Thr-610 the chain carries Phosphothreonine. The Biotinyl-binding domain maps to 745-819 (FEKENDPSVM…DPGCVLAKMQ (75 aa)). N6-biotinyllysine is present on Lys-786. Phosphoserine occurs at positions 835, 1201, 1216, and 1218. Phosphothreonine is present on Thr-1227. 3 positions are modified to phosphoserine: Ser-1259, Ser-1263, and Ser-1273. Position 1334 is an N6-acetyllysine (Lys-1334). The CoA carboxyltransferase N-terminal domain occupies 1576–1914 (PYVTKDLLQS…SVHSSVPLLN (339 aa)). The segment at 1576–2234 (PYVTKDLLQS…EDLVKKKIHN (659 aa)) is carboxyltransferase. CoA-binding residues include Arg-1823, Lys-2127, and Arg-2129. The region spanning 1918-2234 (PIDRIIEFVP…EDLVKKKIHN (317 aa)) is the CoA carboxyltransferase C-terminal domain. At Thr-2153 the chain carries Phosphothreonine.

As to quaternary structure, monomer, homodimer, and homotetramer. Can form filamentous polymers. Interacts in its inactive phosphorylated form with the BRCT domains of BRCA1 which prevents ACACA dephosphorylation and inhibits lipid synthesis. Interacts with MID1IP1; interaction with MID1IP1 promotes oligomerization and increases its activity. It depends on Mg(2+) as a cofactor. Requires Mn(2+) as cofactor. The cofactor is biotin. Phosphorylation on Ser-1263 is required for interaction with BRCA1. In terms of processing, phosphorylation at Ser-80 by AMPK inactivates enzyme activity. Post-translationally, the biotin cofactor is covalently attached to the central biotinyl-binding domain and is required for the catalytic activity. In terms of tissue distribution, expressed in brain, placenta, skeletal muscle, renal, pancreatic and adipose tissues; expressed at low level in pulmonary tissue; not detected in the liver.

It is found in the cytoplasm. The protein resides in the cytosol. The enzyme catalyses hydrogencarbonate + acetyl-CoA + ATP = malonyl-CoA + ADP + phosphate + H(+). It functions in the pathway lipid metabolism; malonyl-CoA biosynthesis; malonyl-CoA from acetyl-CoA: step 1/1. Its activity is regulated as follows. Inhibited by phosphorylation. Citrate promotes oligomerization of the protein into filaments that correspond to the most active form of the carboxylase. Inhibited by palmitoyl-CoA. Functionally, cytosolic enzyme that catalyzes the carboxylation of acetyl-CoA to malonyl-CoA, the first and rate-limiting step of de novo fatty acid biosynthesis. This is a 2 steps reaction starting with the ATP-dependent carboxylation of the biotin carried by the biotin carboxyl carrier (BCC) domain followed by the transfer of the carboxyl group from carboxylated biotin to acetyl-CoA. This Homo sapiens (Human) protein is Acetyl-CoA carboxylase 1.